The chain runs to 298 residues: Estradiol 17-beta-dehydrogenase 11 (298 aa).

The N-terminal stretch at 1-21 (MKYLLDLILLLPLLIVFCIES) is a signal peptide. Residue 40–64 (LITGAGHGIGRLTAYEFAKLNTKLV) participates in NADP(+) binding. S172 serves as a coordination point for substrate. The Proton acceptor role is filled by Y185.

This sequence belongs to the short-chain dehydrogenases/reductases (SDR) family. 17-beta-HSD 3 subfamily.

Its subcellular location is the endoplasmic reticulum. It is found in the lipid droplet. It catalyses the reaction 17beta-estradiol + NAD(+) = estrone + NADH + H(+). The enzyme catalyses 17beta-estradiol + NADP(+) = estrone + NADPH + H(+). In terms of biological role, can convert androstan-3-alpha,17-beta-diol (3-alpha-diol) to androsterone in vitro, suggesting that it may participate in androgen metabolism during steroidogenesis. May act by metabolizing compounds that stimulate steroid synthesis and/or by generating metabolites that inhibit it. Has no activity toward DHEA (dehydroepiandrosterone), or A-dione (4-androste-3,17-dione), and only a slight activity toward testosterone to A-dione. This is Estradiol 17-beta-dehydrogenase 11 (Hsd17b11) from Rattus norvegicus (Rat).